Reading from the N-terminus, the 147-residue chain is C-glycoside deglycosidase beta subunit (147 aa).

The protein belongs to the C-glycoside deglycosidase beta subunit family. Heterooctamer composed of four alpha subunits (DfgA) and four beta subunits (DfgB). The cofactor is Mn(2+).

It catalyses the reaction 3''-dehydroisoorientin = 1,5-anhydro-D-erythro-hex-1-en-3-ulose + luteolin. It carries out the reaction 3''-dehydroisovitexin = 1,5-anhydro-D-erythro-hex-1-en-3-ulose + apigenin. Its activity is regulated as follows. Activity is strongly reduced in the presence of chelating agents. Carbon-carbon bond-cleaving enzyme which participates in the metabolism of C-glycosides. Acts on the C6-glycosylated compounds 3''-dehydroisoorientin (3''-oxo-homoorientin) and 3''-dehydroisovitexin (3''-oxo-isovitexin). The polypeptide is C-glycoside deglycosidase beta subunit (Eubacterium cellulosolvens (strain ATCC 43171 / JCM 9499 / 6) (Cillobacterium cellulosolvens)).